A 494-amino-acid polypeptide reads, in one-letter code: Ceramide glucosyltransferase (494 aa).

Residues 1–6 are Lumenal-facing; it reads MPLLMD. Residues 7 to 27 traverse the membrane as a helical segment; sequence GLAYAGAIWSLIVFCVQAIGL. Residues 28–337 are Cytoplasmic-facing; it reads YQLFRSYSRP…VRWLRVRKWT (310 aa). A short sequence motif (D1) is located at residue aspartate 95. Position 160 (aspartate 160) is a short sequence motif, D2. Position 285 (aspartate 285) is a short sequence motif, D3. Aspartate 285 (proton acceptor) is an active-site residue. Residues 326 to 330 carry the (Q/R)XXRW motif; it reads RRVRW. Residues 338 to 358 traverse the membrane as a helical segment; it reads VLLATLVEPGVESMVCCMAFA. At 359 to 380 the chain is on the lumenal side; it reads HALTTTPWCPNPADWPIPHTWT. A helical transmembrane segment spans residues 381 to 401; that stretch reads ALWSIWLAAIAVWATLDYVVY. The Cytoplasmic portion of the chain corresponds to 402–428; sequence HFLHSCRSIEKDADSPDFAQGNELMKR. Residues 429–449 form a helical membrane-spanning segment; that stretch reads PFGAWILAWIGREILALPIWT. At 450-494 the chain is on the lumenal side; that stretch reads RAVLLGTTVTWRGTKFKVRPDQSVVDIPNAGAKSNGIGSTNRKVR.

This sequence belongs to the glycosyltransferase 2 family.

Its subcellular location is the golgi apparatus membrane. It catalyses the reaction an N-acylsphing-4-enine + UDP-alpha-D-glucose = a beta-D-glucosyl-(1&lt;-&gt;1')-N-acylsphing-4-enine + UDP + H(+). Its pathway is lipid metabolism; sphingolipid metabolism. Its function is as follows. Catalyzes the final step in the biosynthesis of the membrane lipid glucosylceramide (GluCer), the transfer of glucose to ceramide. Glucosylceramides play important roles in growth, differentiation and pathogenicity. The polypeptide is Ceramide glucosyltransferase (Pyricularia oryzae (strain 70-15 / ATCC MYA-4617 / FGSC 8958) (Rice blast fungus)).